Here is a 625-residue protein sequence, read N- to C-terminus: Glucose dehydrogenase [FAD, quinone] (625 aa).

The first 42 residues, 1-42 (MATSPSSCDCLVGVPTGPTLASTCGGSAFMLFMGLLEVFIRS), serve as a signal peptide directing secretion. Position 66–95 (66–95 (DFIVIGGGSAGSVVASRLSEVPQWKVLLIE)) interacts with FAD. Catalysis depends on His544, which acts as the Proton acceptor. Sec613 is a non-standard amino acid (selenocysteine).

The protein belongs to the GMC oxidoreductase family. The cofactor is FAD.

Its subcellular location is the secreted. The enzyme catalyses a quinone + D-glucose = D-glucono-1,5-lactone + a quinol. The sequence is that of Glucose dehydrogenase [FAD, quinone] (Gld) from Drosophila pseudoobscura pseudoobscura (Fruit fly).